We begin with the raw amino-acid sequence, 291 residues long: Light-independent protochlorophyllide reductase iron-sulfur ATP-binding protein (291 aa).

Residues Gly-10–Thr-15 and Lys-39 contribute to the ATP site. Position 14 (Ser-14) interacts with Mg(2+). [4Fe-4S] cluster is bound by residues Cys-95 and Cys-129. Position 180–181 (Asn-180–Arg-181) interacts with ATP.

This sequence belongs to the NifH/BchL/ChlL family. As to quaternary structure, homodimer. Protochlorophyllide reductase is composed of three subunits; ChlL, ChlN and ChlB. Requires [4Fe-4S] cluster as cofactor.

The protein localises to the plastid. The protein resides in the chloroplast. It catalyses the reaction chlorophyllide a + oxidized 2[4Fe-4S]-[ferredoxin] + 2 ADP + 2 phosphate = protochlorophyllide a + reduced 2[4Fe-4S]-[ferredoxin] + 2 ATP + 2 H2O. The protein operates within porphyrin-containing compound metabolism; chlorophyll biosynthesis (light-independent). In terms of biological role, component of the dark-operative protochlorophyllide reductase (DPOR) that uses Mg-ATP and reduced ferredoxin to reduce ring D of protochlorophyllide (Pchlide) to form chlorophyllide a (Chlide). This reaction is light-independent. The L component serves as a unique electron donor to the NB-component of the complex, and binds Mg-ATP. The sequence is that of Light-independent protochlorophyllide reductase iron-sulfur ATP-binding protein from Pinus thunbergii (Japanese black pine).